Consider the following 314-residue polypeptide: Ketimine reductase mu-crystallin (314 aa).

A 3,3',5-triiodo-L-thyronine-binding site is contributed by Arg-47. Residues Ser-91, His-92, Arg-119, Ala-144, Val-146, Gln-147, Asn-168, Arg-169, Thr-170, Asn-173, Thr-205, Met-206, and Val-226 each coordinate NADPH. Glu-257 is a binding site for 3,3',5-triiodo-L-thyronine. Ser-292 contacts NADPH.

Belongs to the ornithine cyclodeaminase/mu-crystallin family. Homodimer. Binds the thyroid hormone triiodothyronine (T3); T3 binding inhibits enzymatic activity. As to expression, expressed at high abundance in lens, but outside the lens it is preferentially expressed in neural tissues, retina and brain.

The protein localises to the cytoplasm. The catalysed reaction is L-pipecolate + NADP(+) = Delta(1)-piperideine-2-carboxylate + NADPH + H(+). It carries out the reaction L-pipecolate + NAD(+) = Delta(1)-piperideine-2-carboxylate + NADH + H(+). The enzyme catalyses L-proline + NADP(+) = 1-pyrroline-2-carboxylate + NADPH + H(+). It catalyses the reaction L-proline + NAD(+) = 1-pyrroline-2-carboxylate + NADH + H(+). The catalysed reaction is (3R)-1,4-thiomorpholine-3-carboxylate + NAD(+) = 3,4-dehydrothiomorpholine-3-carboxylate + NADH + 2 H(+). It carries out the reaction (3R)-1,4-thiomorpholine-3-carboxylate + NADP(+) = 3,4-dehydrothiomorpholine-3-carboxylate + NADPH + 2 H(+). The enzyme catalyses (S)-cystathionine ketimine + NADH + 2 H(+) = (3R,5S)-2,3,5,6,7-pentahydro-1,4-thiazepine-3,5-dicarboxylate + NAD(+). It catalyses the reaction (S)-cystathionine ketimine + NADPH + 2 H(+) = (3R,5S)-2,3,5,6,7-pentahydro-1,4-thiazepine-3,5-dicarboxylate + NADP(+). The catalysed reaction is (R)-lanthionine ketimine + NADPH + 2 H(+) = (3R,5R)-1,4-thiomorpholine-3,5-dicarboxylate + NADP(+). It carries out the reaction Delta(2)-thiazoline-2-carboxylate + NADPH + 2 H(+) = L-thiazolidine-2-carboxylate + NADP(+). Catalyzes the NAD(P)H-dependent reduction of imine double bonds of a number of cyclic ketimine substrates, including sulfur-containing cyclic ketimines. Under physiological conditions, it efficiently catalyzes delta(1)-piperideine-2-carboxylate (P2C) and delta(1)-pyrroline-2-carboxylate (Pyr2C) reduction, suggesting a central role in lysine and glutamate metabolism. Additional substrates are delta(2)-thiazoline-2-carboxylate (T2C), 3,4-dehydrothiomorpholine-3-carboxylate (AECK), and (R)-lanthionine ketimine (LK) that is reduced at very low rate compared to other substrates. Also catalyzes the NAD(P)H-dependent reduction of (S)-cystathionine ketimine (CysK). In Macropus fuliginosus (Western gray kangaroo), this protein is Ketimine reductase mu-crystallin (CRYM).